The sequence spans 299 residues: Coenzyme PQQ synthesis protein B (299 aa).

Belongs to the PqqB family.

It functions in the pathway cofactor biosynthesis; pyrroloquinoline quinone biosynthesis. In terms of biological role, may be involved in the transport of PQQ or its precursor to the periplasm. The polypeptide is Coenzyme PQQ synthesis protein B (Xanthomonas euvesicatoria pv. vesicatoria (strain 85-10) (Xanthomonas campestris pv. vesicatoria)).